The chain runs to 295 residues: Iron-sulfur cluster carrier protein (295 aa).

38-45 (GKGGVGKS) serves as a coordination point for ATP.

This sequence belongs to the Mrp/NBP35 ATP-binding proteins family. Homodimer.

Its function is as follows. Binds and transfers iron-sulfur (Fe-S) clusters to target apoproteins. Can hydrolyze ATP. In Pyrococcus furiosus (strain ATCC 43587 / DSM 3638 / JCM 8422 / Vc1), this protein is Iron-sulfur cluster carrier protein.